A 427-amino-acid chain; its full sequence is Putative FBD-associated F-box protein At3g50710 (427 aa).

One can recognise an F-box domain in the interval 1 to 53 (MDRISNLSDDLLLKIVSSLPTKDVVVTMLLSKRWKFLWMMVPKLRFDDEFELE). In terms of domain architecture, FBD spans 345 to 395 (HWEEPSSVPQCLLFHLNIFEWKYYNAGDEEKKVVAYILKNARQLKTATFSA).

This is Putative FBD-associated F-box protein At3g50710 from Arabidopsis thaliana (Mouse-ear cress).